The primary structure comprises 739 residues: Polyribonucleotide nucleotidyltransferase (739 aa).

Residues Asp487 and Asp493 each coordinate Mg(2+). One can recognise a KH domain in the interval 554 to 613; sequence PRIETMQIPTDKIRDVIGTGGKVIREIVEKTGAKINIEDTGVVKIASADGKAIKAAYNWI. The S1 motif domain occupies 623-691; that stretch reads GVIYDGTIVK…DRGKIRLSMK (69 aa). The tract at residues 694 to 739 is disordered; the sequence is DQQTGEDITDKIKAQRDAERAERGDEPREPREGGRHRGERRREAGE. A compositionally biased stretch (basic and acidic residues) spans 701–739; it reads ITDKIKAQRDAERAERGDEPREPREGGRHRGERRREAGE.

It belongs to the polyribonucleotide nucleotidyltransferase family. Mg(2+) serves as cofactor.

The protein resides in the cytoplasm. It catalyses the reaction RNA(n+1) + phosphate = RNA(n) + a ribonucleoside 5'-diphosphate. Involved in mRNA degradation. Catalyzes the phosphorolysis of single-stranded polyribonucleotides processively in the 3'- to 5'-direction. This chain is Polyribonucleotide nucleotidyltransferase, found in Methylobacterium radiotolerans (strain ATCC 27329 / DSM 1819 / JCM 2831 / NBRC 15690 / NCIMB 10815 / 0-1).